Here is a 1589-residue protein sequence, read N- to C-terminus: Centrosomal protein of 170 kDa protein B (1589 aa).

Residues Ile-23–Ile-73 enclose the FHA domain. 4 disordered regions span residues Arg-130–Pro-261, Ile-287–Ser-309, Leu-325–Arg-388, and Phe-409–Glu-583. Basic and acidic residues-rich tracts occupy residues Arg-147 to Gly-156 and Pro-243 to Glu-253. The span at Gly-330 to Val-344 shows a compositional bias: basic and acidic residues. 2 positions are modified to phosphoserine: Ser-360 and Ser-421. Basic and acidic residues-rich tracts occupy residues Pro-430–Pro-446 and Leu-467–Leu-476. A compositionally biased stretch (low complexity) spans Ser-478–Pro-489. A phosphoserine mark is found at Ser-480 and Ser-492. Residues Glu-520 to Leu-530 are compositionally biased toward pro residues. At Ser-536 the chain carries Phosphoserine. Residues Val-538 to Thr-548 show a composition bias toward pro residues. Thr-542 is modified (phosphothreonine). 16 positions are modified to phosphoserine: Ser-597, Ser-619, Ser-655, Ser-711, Ser-721, Ser-746, Ser-748, Ser-751, Ser-753, Ser-772, Ser-829, Ser-853, Ser-954, Ser-972, Ser-986, and Ser-988. Disordered regions lie at residues Pro-598 to Leu-895, Asp-934 to Phe-1316, Asp-1350 to Ser-1374, and Ala-1532 to Ala-1552. Residues Ser-711–Gly-722 are compositionally biased toward low complexity. The segment covering Asp-957–Ser-972 has biased composition (polar residues). Basic residues predominate over residues Ser-1029–Arg-1038. A phosphoserine mark is found at Ser-1135, Ser-1179, and Ser-1199. Polar residues predominate over residues Ala-1221 to Pro-1230. The span at Pro-1286–Pro-1301 shows a compositional bias: low complexity. Thr-1304 is subject to Phosphothreonine. Phosphoserine is present on residues Ser-1356 and Ser-1362. The span at Ala-1363–Ser-1374 shows a compositional bias: polar residues. Positions Ala-1542–Ala-1552 are enriched in low complexity. Phosphoserine is present on residues Ser-1545 and Ser-1548.

This sequence belongs to the CEP170 family.

It is found in the cytoplasm. Its subcellular location is the cytoskeleton. In terms of biological role, plays a role in microtubule organization. The chain is Centrosomal protein of 170 kDa protein B (CEP170B) from Homo sapiens (Human).